The following is a 392-amino-acid chain: Integrin-linked kinase-associated serine/threonine phosphatase 2C (392 aa).

Met1 is subject to N-acetylmethionine. The interval 1-91 (MDLFGDLPEP…PEEEKNGGEE (91 aa)) is disordered. Positions 56-70 (SGNSGSLATSGSQVV) are enriched in polar residues. A compositionally biased stretch (basic and acidic residues) spans 72-91 (TEGKGAKRKAPEEEKNGGEE). Positions 108-390 (KGYVAERKGE…DNVTVMVVRI (283 aa)) constitute a PPM-type phosphatase domain. 2 residues coordinate Mn(2+): Asp152 and Gly153. The residue at position 210 (Lys210) is an N6-acetyllysine. Residues Asp326 and Asp381 each coordinate Mn(2+).

The protein belongs to the PP2C family. In terms of assembly, interacts with ILK. Requires Mg(2+) as cofactor. The cofactor is Mn(2+).

It is found in the cytoplasm. It carries out the reaction O-phospho-L-seryl-[protein] + H2O = L-seryl-[protein] + phosphate. The enzyme catalyses O-phospho-L-threonyl-[protein] + H2O = L-threonyl-[protein] + phosphate. Protein phosphatase that may play a role in regulation of cell cycle progression via dephosphorylation of its substrates whose appropriate phosphorylation states might be crucial for cell proliferation. Selectively associates with integrin linked kinase (ILK), to modulate cell adhesion and growth factor signaling. Inhibits the ILK-GSK3B signaling axis and may play an important role in inhibiting oncogenic transformation. In Mus musculus (Mouse), this protein is Integrin-linked kinase-associated serine/threonine phosphatase 2C (Ilkap).